We begin with the raw amino-acid sequence, 360 residues long: Chorismate synthase (360 aa).

An NADP(+)-binding site is contributed by Arg46. FMN-binding positions include 122–124, Gly282, 297–301, and Arg324; these read RAS and KPTPS.

It belongs to the chorismate synthase family. It depends on FMNH2 as a cofactor.

The catalysed reaction is 5-O-(1-carboxyvinyl)-3-phosphoshikimate = chorismate + phosphate. It functions in the pathway metabolic intermediate biosynthesis; chorismate biosynthesis; chorismate from D-erythrose 4-phosphate and phosphoenolpyruvate: step 7/7. Its function is as follows. Catalyzes the anti-1,4-elimination of the C-3 phosphate and the C-6 proR hydrogen from 5-enolpyruvylshikimate-3-phosphate (EPSP) to yield chorismate, which is the branch point compound that serves as the starting substrate for the three terminal pathways of aromatic amino acid biosynthesis. This reaction introduces a second double bond into the aromatic ring system. The chain is Chorismate synthase from Archaeoglobus fulgidus (strain ATCC 49558 / DSM 4304 / JCM 9628 / NBRC 100126 / VC-16).